A 300-amino-acid chain; its full sequence is Cysteine-rich venom protein (300 aa).

An N-terminal signal peptide occupies residues 1 to 21; it reads MLSTMQTVGAVLMLSIVLVAG. Residues 22–24 constitute a propeptide that is removed on maturation; that stretch reads RKR. Positions 62-183 constitute an SCP domain; the sequence is LEMHNKIRAD…GNNKYFVCNY (122 aa).

In terms of processing, contains 11 disulfide bonds. Expressed by the venom duct.

It localises to the secreted. Its function is as follows. Protease responsible for cleaving the conotoxins from their propeptide precursors. The target propeptide requires minimum four residues including a leucine N-terminal of the cleavage site for efficient substrate processing (example: Xaa-Xaa-Xaa-Leu-Asn-Lys-Arg-toxin). This chain is Cysteine-rich venom protein, found in Conus textile (Cloth-of-gold cone).